The following is a 648-amino-acid chain: Macrolide export ATP-binding/permease protein MacB (648 aa).

In terms of domain architecture, ABC transporter spans 5 to 243; the sequence is LELKDIRRSY…AGGTEPVVNT (239 aa). 41–48 contacts ATP; that stretch reads GASGSGKS. Helical transmembrane passes span 273 to 293, 523 to 543, 576 to 596, and 600 to 620; these read LLTM…VVVG, LFLT…VMNI, AVLV…LIAF, and LFLP…AFLC.

It belongs to the ABC transporter superfamily. Macrolide exporter (TC 3.A.1.122) family. Homodimer. Part of the tripartite efflux system MacAB-TolC, which is composed of an inner membrane transporter, MacB, a periplasmic membrane fusion protein, MacA, and an outer membrane component, TolC. The complex forms a large protein conduit and can translocate molecules across both the inner and outer membranes. Interacts with MacA.

Its subcellular location is the cell inner membrane. In terms of biological role, part of the tripartite efflux system MacAB-TolC. MacB is a non-canonical ABC transporter that contains transmembrane domains (TMD), which form a pore in the inner membrane, and an ATP-binding domain (NBD), which is responsible for energy generation. Confers resistance against macrolides. The chain is Macrolide export ATP-binding/permease protein MacB from Shigella flexneri.